We begin with the raw amino-acid sequence, 82 residues long: Small ribosomal subunit protein bS16 (82 aa).

This sequence belongs to the bacterial ribosomal protein bS16 family.

The chain is Small ribosomal subunit protein bS16 from Rippkaea orientalis (strain PCC 8801 / RF-1) (Cyanothece sp. (strain PCC 8801)).